The primary structure comprises 190 residues: Threonylcarbamoyl-AMP synthase (190 aa).

The region spanning T7–G190 is the YrdC-like domain.

Belongs to the SUA5 family. TsaC subfamily.

It is found in the cytoplasm. The catalysed reaction is L-threonine + hydrogencarbonate + ATP = L-threonylcarbamoyladenylate + diphosphate + H2O. Functionally, required for the formation of a threonylcarbamoyl group on adenosine at position 37 (t(6)A37) in tRNAs that read codons beginning with adenine. Catalyzes the conversion of L-threonine, HCO(3)(-)/CO(2) and ATP to give threonylcarbamoyl-AMP (TC-AMP) as the acyladenylate intermediate, with the release of diphosphate. In Salmonella arizonae (strain ATCC BAA-731 / CDC346-86 / RSK2980), this protein is Threonylcarbamoyl-AMP synthase.